The chain runs to 255 residues: ParA family protein CPn_0805/CP_1066/CPj0805/CpB0834 (255 aa).

Belongs to the ParA family.

This is ParA family protein CPn_0805/CP_1066/CPj0805/CpB0834 from Chlamydia pneumoniae (Chlamydophila pneumoniae).